A 282-amino-acid polypeptide reads, in one-letter code: F-actin-capping protein subunit beta (282 aa).

The tract at residues 73–103 (SPWSNQFDPPLDEAGSGGVGAGGNEGAGEGA) is disordered. Over residues 87–101 (GSGGVGAGGNEGAGE) the composition is skewed to gly residues.

The protein belongs to the F-actin-capping protein beta subunit family. As to quaternary structure, component of the F-actin capping complex, composed of a heterodimer of an alpha and a beta subunit.

Its subcellular location is the cytoplasm. It localises to the cytoskeleton. The protein localises to the actin patch. Functionally, F-actin-capping proteins bind in a Ca(2+)-independent manner to the fast growing ends of actin filaments (barbed end) thereby blocking the exchange of subunits at these ends. Unlike other capping proteins (such as gelsolin and severin), these proteins do not sever actin filaments. The sequence is that of F-actin-capping protein subunit beta (CAP2) from Gibberella zeae (strain ATCC MYA-4620 / CBS 123657 / FGSC 9075 / NRRL 31084 / PH-1) (Wheat head blight fungus).